The sequence spans 453 residues: Bifunctional protein GlmU (453 aa).

Residues 1–226 are pyrophosphorylase; sequence MVAIAILAAG…YEEILGINDR (226 aa). UDP-N-acetyl-alpha-D-glucosamine contacts are provided by residues 7–10, Lys-21, Gln-73, and 78–79; these read LAAG and GT. A Mg(2+)-binding site is contributed by Asp-103. Gly-140, Glu-155, Asn-170, and Asn-224 together coordinate UDP-N-acetyl-alpha-D-glucosamine. Asn-224 lines the Mg(2+) pocket. The linker stretch occupies residues 227–247; that stretch reads KQLALAYQILQNRIKDQAMAA. The N-acetyltransferase stretch occupies residues 248 to 453; that stretch reads GVTLIDPDSI…GWRLKQPDPT (206 aa). Residues Arg-329 and Lys-347 each contribute to the UDP-N-acetyl-alpha-D-glucosamine site. His-359 (proton acceptor) is an active-site residue. The UDP-N-acetyl-alpha-D-glucosamine site is built by Tyr-362 and Asn-373. Acetyl-CoA is bound by residues Ala-376, 382–383, Ser-401, Ala-419, and Arg-436; that span reads NY.

This sequence in the N-terminal section; belongs to the N-acetylglucosamine-1-phosphate uridyltransferase family. It in the C-terminal section; belongs to the transferase hexapeptide repeat family. As to quaternary structure, homotrimer. Requires Mg(2+) as cofactor.

Its subcellular location is the cytoplasm. The catalysed reaction is alpha-D-glucosamine 1-phosphate + acetyl-CoA = N-acetyl-alpha-D-glucosamine 1-phosphate + CoA + H(+). It catalyses the reaction N-acetyl-alpha-D-glucosamine 1-phosphate + UTP + H(+) = UDP-N-acetyl-alpha-D-glucosamine + diphosphate. It participates in nucleotide-sugar biosynthesis; UDP-N-acetyl-alpha-D-glucosamine biosynthesis; N-acetyl-alpha-D-glucosamine 1-phosphate from alpha-D-glucosamine 6-phosphate (route II): step 2/2. It functions in the pathway nucleotide-sugar biosynthesis; UDP-N-acetyl-alpha-D-glucosamine biosynthesis; UDP-N-acetyl-alpha-D-glucosamine from N-acetyl-alpha-D-glucosamine 1-phosphate: step 1/1. Its pathway is bacterial outer membrane biogenesis; LPS lipid A biosynthesis. Catalyzes the last two sequential reactions in the de novo biosynthetic pathway for UDP-N-acetylglucosamine (UDP-GlcNAc). The C-terminal domain catalyzes the transfer of acetyl group from acetyl coenzyme A to glucosamine-1-phosphate (GlcN-1-P) to produce N-acetylglucosamine-1-phosphate (GlcNAc-1-P), which is converted into UDP-GlcNAc by the transfer of uridine 5-monophosphate (from uridine 5-triphosphate), a reaction catalyzed by the N-terminal domain. The chain is Bifunctional protein GlmU from Cyanothece sp. (strain PCC 7425 / ATCC 29141).